Here is a 549-residue protein sequence, read N- to C-terminus: Nectin-3 (549 aa).

The signal sequence occupies residues 1-57; the sequence is MARTLRPSPLCPGGGKAQLSSASLLGAGLLLQPPTPPPLLLLLFPLLLFSRLCGALA. Over 58 to 404 the chain is Extracellular; that stretch reads GPIIVEPHVT…ATIKDDTIAT (347 aa). The 107-residue stretch at 59 to 165 folds into the Ig-like V-type domain; it reads PIIVEPHVTA…GNAQSSTTVT (107 aa). N-linked (GlcNAc...) asparagine glycans are attached at residues asparagine 73, asparagine 83, asparagine 125, asparagine 186, asparagine 222, and asparagine 331. Cysteine 78 and cysteine 148 are joined by a disulfide. 2 Ig-like C2-type domains span residues 170 to 258 and 269 to 354; these read PTVS…KDIR and PEVS…KVIY. 2 cysteine pairs are disulfide-bonded: cysteine 193/cysteine 246 and cysteine 291/cysteine 338. Residues 405–425 form a helical membrane-spanning segment; that stretch reads IIASVVGGALFIVLVSVLAGI. Topologically, residues 426–549 are cytoplasmic; that stretch reads FCYRRRRTFR…SVISRREWYV (124 aa).

Belongs to the nectin family. In terms of assembly, cis- and trans-homodimer. Can form trans-heterodimers with NECTIN1, NECTIN2, PVR, IGSF4B/Necl-1 and with IGSF4. Interaction between NECTIN1 and NECTIN3 on the pre- and postsynaptic sites, respectively, initiates the formation of puncta adherentia junctions between axons and dendrites. Interacts (via Cytoplasmic domain) with AFDN, providing a connection with the actin cytoskeleton. Binds with low affinity to TIGIT. (Microbial infection) Interacts with C.difficile toxin TcdB, suggesting that it may contribute to TcdB toxin entry into cells. It was however shown that NECTIN3/PVRL3 does not act as a major receptor for TcdB. In terms of tissue distribution, predominantly expressed in testis and placenta as well as in many cell lines, including epithelial cell lines.

The protein resides in the cell membrane. Its subcellular location is the postsynaptic cell membrane. It is found in the cell junction. It localises to the adherens junction. Its function is as follows. Cell adhesion molecule that promotes cell-cell adhesion through heterophilic trans-interactions with nectins-like or other nectins, such as trans-interaction with NECTIN2 at Sertoli-spermatid junctions. Trans-interaction with PVR induces activation of CDC42 and RAC small G proteins through common signaling molecules such as SRC and RAP1. Induces endocytosis-mediated down-regulation of PVR from the cell surface, resulting in reduction of cell movement and proliferation. Involved in axon guidance by promoting contacts between the commissural axons and the floor plate cells. Also involved in the formation of cell-cell junctions, including adherens junctions and synapses. Promotes formation of checkerboard-like cellular pattern of hair cells and supporting cells in the auditory epithelium via heterophilic interaction with NECTIN1: NECTIN1 is present in the membrane of hair cells and associates with NECTIN3 on supporting cells, thereby mediating heterotypic adhesion between these two cell types. Plays a role in the morphology of the ciliary body. The sequence is that of Nectin-3 from Homo sapiens (Human).